Reading from the N-terminus, the 312-residue chain is Small ribosomal subunit protein uS2m (312 aa).

It belongs to the universal ribosomal protein uS2 family.

The protein localises to the mitochondrion. The polypeptide is Small ribosomal subunit protein uS2m (RPS2) (Acanthamoeba castellanii (Amoeba)).